A 450-amino-acid chain; its full sequence is Benzene 1,2-dioxygenase subunit alpha (450 aa).

One can recognise a Rieske domain in the interval Leu-56 to Ala-163. Positions 96, 98, 116, and 119 each coordinate [2Fe-2S] cluster. Positions 222 and 228 each coordinate Fe cation.

This sequence belongs to the bacterial ring-hydroxylating dioxygenase alpha subunit family. In terms of assembly, this dioxygenase system consists of four proteins: the two subunits of the hydroxylase component (BedC1 and BedC2), a ferredoxin (BedB) and a ferredoxin reductase (BedA). [2Fe-2S] cluster is required as a cofactor. Requires Fe cation as cofactor.

It carries out the reaction benzene + NADH + O2 + H(+) = cis-1,2-dihydrobenzene-1,2-diol + NAD(+). The protein operates within aromatic compound metabolism; benzene degradation; catechol from benzene: step 1/2. The protein is Benzene 1,2-dioxygenase subunit alpha (bedC1) of Pseudomonas putida (Arthrobacter siderocapsulatus).